We begin with the raw amino-acid sequence, 194 residues long: Protein LURP-one-related 10 (194 aa).

Belongs to the LOR family.

Its function is as follows. Might be related to the phospholipid scramblase and tubby-like superfamily of membrane tethered transcription factors. This Arabidopsis thaliana (Mouse-ear cress) protein is Protein LURP-one-related 10.